Here is a 214-residue protein sequence, read N- to C-terminus: Acetoin utilization protein AcuB (214 aa).

CBS domains follow at residues 7-66 and 78-135; these read MKRD…ENKR and MKKD…GADQ.

In terms of assembly, interacts with YabA.

The protein operates within ketone degradation; acetoin degradation. Role in growth and sporulation on acetoin or butanediol. Involved in the breakdown of these compounds used as a carbon source. The polypeptide is Acetoin utilization protein AcuB (acuB) (Bacillus subtilis (strain 168)).